We begin with the raw amino-acid sequence, 762 residues long: LON peptidase N-terminal domain and RING finger protein 1 (762 aa).

Residues 1–35 (MSSPAVARASPGGNREASGGPRSRNGPWEVGGGGE) are disordered. The stretch at 47–80 (WELLLRRGELLALGGHLKGALEAFAAALRRGAPA) is one TPR 1 repeat. Residues 118-154 (CLSCRGFLSEPVTVPCGHSYCRRCLRRELRARCRLCR) form an RING-type 1 zinc finger. TPR repeat units follow at residues 201-233 (ARAAGRLGELLHEGRYREALAAACDALRAEPSD), 235-267 (TLKIYRAESYAGLQEFKAALEDLNAVLFQLPNW), and 268-301 (PEVYFRKGKVLQDAGFLGDALQLFLQCLALDEDF). S420 is modified (phosphoserine). An RING-type 2 zinc finger spans residues 468 to 506 (CSLCMRLFFEPVTTPCGHSFCKNCLERCLDHAPYCPLCK). Positions 547-757 (TAELSHLTKN…KIQHILTYFS (211 aa)) constitute a Lon N-terminal domain.

This chain is LON peptidase N-terminal domain and RING finger protein 1 (Lonrf1), found in Mus musculus (Mouse).